The chain runs to 283 residues: MTQTQPVGTLRLTIDDQGPQGQSRAVEQFHQGALRVIRPHYLDDSGQVSYTIIAIGGGYLGGDVYEQQFTVKDNAKALITTQSATKIYRTPQGPVTQYTEINVGENAVLEYLADQTIAYRESTYHQFTKVTLHPTSTFVMSEQITPGWHPDGKHFAYDEMRLHTEITDSTTGRLVLLDNLLLRPDSREGSFGWTEQYTHSGQMIVMGEGVDKQLVAELNEQLAAHPDVYGAVNFLSAPGTLLRGFIARTLSNRTEELINLHEHIASLLRGRWRGQEPVNLRKY.

The tract at residues 1–20 (MTQTQPVGTLRLTIDDQGPQ) is disordered.

It belongs to the UreD family. UreD, UreF and UreG form a complex that acts as a GTP-hydrolysis-dependent molecular chaperone, activating the urease apoprotein by helping to assemble the nickel containing metallocenter of UreC. The UreE protein probably delivers the nickel.

The protein resides in the cytoplasm. Functionally, required for maturation of urease via the functional incorporation of the urease nickel metallocenter. This chain is Urease accessory protein UreD, found in Corynebacterium glutamicum (strain R).